We begin with the raw amino-acid sequence, 114 residues long: Large ribosomal subunit protein uL22 (114 aa).

It belongs to the universal ribosomal protein uL22 family. In terms of assembly, part of the 50S ribosomal subunit.

Functionally, this protein binds specifically to 23S rRNA; its binding is stimulated by other ribosomal proteins, e.g. L4, L17, and L20. It is important during the early stages of 50S assembly. It makes multiple contacts with different domains of the 23S rRNA in the assembled 50S subunit and ribosome. In terms of biological role, the globular domain of the protein is located near the polypeptide exit tunnel on the outside of the subunit, while an extended beta-hairpin is found that lines the wall of the exit tunnel in the center of the 70S ribosome. This is Large ribosomal subunit protein uL22 from Desulfosudis oleivorans (strain DSM 6200 / JCM 39069 / Hxd3) (Desulfococcus oleovorans).